The following is a 495-amino-acid chain: Aspartyl/glutamyl-tRNA(Asn/Gln) amidotransferase subunit B (495 aa).

Belongs to the GatB/GatE family. GatB subfamily. Heterotrimer of A, B and C subunits.

The catalysed reaction is L-glutamyl-tRNA(Gln) + L-glutamine + ATP + H2O = L-glutaminyl-tRNA(Gln) + L-glutamate + ADP + phosphate + H(+). It catalyses the reaction L-aspartyl-tRNA(Asn) + L-glutamine + ATP + H2O = L-asparaginyl-tRNA(Asn) + L-glutamate + ADP + phosphate + 2 H(+). Functionally, allows the formation of correctly charged Asn-tRNA(Asn) or Gln-tRNA(Gln) through the transamidation of misacylated Asp-tRNA(Asn) or Glu-tRNA(Gln) in organisms which lack either or both of asparaginyl-tRNA or glutaminyl-tRNA synthetases. The reaction takes place in the presence of glutamine and ATP through an activated phospho-Asp-tRNA(Asn) or phospho-Glu-tRNA(Gln). This Methanosarcina barkeri (strain Fusaro / DSM 804) protein is Aspartyl/glutamyl-tRNA(Asn/Gln) amidotransferase subunit B.